The primary structure comprises 321 residues: Chemotaxis protein CheV1 (321 aa).

In terms of domain architecture, CheW-like spans 19–177 (ELQLLCFRLG…IEKMLIDVFP (159 aa)). In terms of domain architecture, Response regulatory spans 198-319 (CVLLADDSPS…IQRVVKQFLE (122 aa)). D252 is modified (4-aspartylphosphate).

In terms of biological role, plays an essential role in chemotaxis signal transduction system in order to colonize the host stomach. May act as a phosphate sink to control the flow of phosphate to CheAY. This chain is Chemotaxis protein CheV1, found in Helicobacter pylori (strain ATCC 700392 / 26695) (Campylobacter pylori).